The sequence spans 465 residues: Cysteine--tRNA ligase (465 aa).

Cysteine 30 serves as a coordination point for Zn(2+). The 'HIGH' region signature appears at 32-42 (ITVYDYCHVGH). Residues cysteine 214, histidine 239, and glutamate 243 each coordinate Zn(2+). Positions 271-275 (KMSKS) match the 'KMSKS' region motif. Lysine 274 serves as a coordination point for ATP.

This sequence belongs to the class-I aminoacyl-tRNA synthetase family. In terms of assembly, monomer. Requires Zn(2+) as cofactor.

The protein localises to the cytoplasm. The catalysed reaction is tRNA(Cys) + L-cysteine + ATP = L-cysteinyl-tRNA(Cys) + AMP + diphosphate. This is Cysteine--tRNA ligase from Burkholderia cenocepacia (strain ATCC BAA-245 / DSM 16553 / LMG 16656 / NCTC 13227 / J2315 / CF5610) (Burkholderia cepacia (strain J2315)).